We begin with the raw amino-acid sequence, 488 residues long: Probable glycine dehydrogenase (decarboxylating) subunit 2 (488 aa).

Lys-273 bears the N6-(pyridoxal phosphate)lysine mark.

Belongs to the GcvP family. C-terminal subunit subfamily. The glycine cleavage system is composed of four proteins: P, T, L and H. In this organism, the P 'protein' is a heterodimer of two subunits. It depends on pyridoxal 5'-phosphate as a cofactor.

The catalysed reaction is N(6)-[(R)-lipoyl]-L-lysyl-[glycine-cleavage complex H protein] + glycine + H(+) = N(6)-[(R)-S(8)-aminomethyldihydrolipoyl]-L-lysyl-[glycine-cleavage complex H protein] + CO2. The glycine cleavage system catalyzes the degradation of glycine. The P protein binds the alpha-amino group of glycine through its pyridoxal phosphate cofactor; CO(2) is released and the remaining methylamine moiety is then transferred to the lipoamide cofactor of the H protein. The polypeptide is Probable glycine dehydrogenase (decarboxylating) subunit 2 (Halalkalibacterium halodurans (strain ATCC BAA-125 / DSM 18197 / FERM 7344 / JCM 9153 / C-125) (Bacillus halodurans)).